A 152-amino-acid chain; its full sequence is Plant UBX domain-containing protein 12 (152 aa).

Positions 32-61 (KRFSEEESEETENTTNSSNAVFGFPNLPEE) are disordered. The UBX domain occupies 67–150 (DQSVLCRICV…GLANSLVSVT (84 aa)).

The chain is Plant UBX domain-containing protein 12 from Arabidopsis thaliana (Mouse-ear cress).